Consider the following 306-residue polypeptide: Acetaldehyde dehydrogenase 3 (306 aa).

C131 serves as the catalytic Acyl-thioester intermediate. NAD(+) contacts are provided by residues 162–170 (SVGPGTRKN) and N273.

The protein belongs to the acetaldehyde dehydrogenase family.

The enzyme catalyses acetaldehyde + NAD(+) + CoA = acetyl-CoA + NADH + H(+). In Burkholderia lata (strain ATCC 17760 / DSM 23089 / LMG 22485 / NCIMB 9086 / R18194 / 383), this protein is Acetaldehyde dehydrogenase 3.